The sequence spans 163 residues: Peptide methionine sulfoxide reductase MsrA (163 aa).

Cys-10 is a catalytic residue.

The protein belongs to the MsrA Met sulfoxide reductase family.

The enzyme catalyses L-methionyl-[protein] + [thioredoxin]-disulfide + H2O = L-methionyl-(S)-S-oxide-[protein] + [thioredoxin]-dithiol. It catalyses the reaction [thioredoxin]-disulfide + L-methionine + H2O = L-methionine (S)-S-oxide + [thioredoxin]-dithiol. Has an important function as a repair enzyme for proteins that have been inactivated by oxidation. Catalyzes the reversible oxidation-reduction of methionine sulfoxide in proteins to methionine. The polypeptide is Peptide methionine sulfoxide reductase MsrA (Vesicomyosocius okutanii subsp. Calyptogena okutanii (strain HA)).